The chain runs to 354 residues: Threonine synthase (354 aa).

Residue K61 is modified to N6-(pyridoxal phosphate)lysine. Pyridoxal 5'-phosphate is bound by residues N87, 187–191, and T316; that span reads GNAGN.

Belongs to the threonine synthase family. It depends on pyridoxal 5'-phosphate as a cofactor.

The catalysed reaction is O-phospho-L-homoserine + H2O = L-threonine + phosphate. It participates in amino-acid biosynthesis; L-threonine biosynthesis; L-threonine from L-aspartate: step 5/5. Functionally, catalyzes the gamma-elimination of phosphate from L-phosphohomoserine and the beta-addition of water to produce L-threonine. This chain is Threonine synthase (thrC), found in Halalkalibacterium halodurans (strain ATCC BAA-125 / DSM 18197 / FERM 7344 / JCM 9153 / C-125) (Bacillus halodurans).